The following is a 372-amino-acid chain: Enoyl-[acyl-carrier-protein] reductase, mitochondrial (372 aa).

A mitochondrion-targeting transit peptide spans 1–18 (MSFFKTAVRRFSSTSITR). Catalysis depends on tyrosine 72, which acts as the Proton donor. NADP(+) contacts are provided by residues asparagine 157, 183–186 (NSMV), 206–208 (RNR), 279–282 (FGGM), 304–306 (FWV), and lysine 365.

The protein belongs to the zinc-containing alcohol dehydrogenase family. Quinone oxidoreductase subfamily. In terms of assembly, homodimer.

The protein resides in the mitochondrion matrix. The catalysed reaction is a 2,3-saturated acyl-[ACP] + NADP(+) = a (2E)-enoyl-[ACP] + NADPH + H(+). In terms of biological role, catalyzes the NADPH-dependent reduction of trans-2-enoyl thioesters in mitochondrial fatty acid synthesis (fatty acid synthesis type II). Fatty acid chain elongation in mitochondria uses acyl carrier protein (ACP) as an acyl group carrier, but the enzyme accepts both ACP and CoA thioesters as substrates in vitro. Required for respiration and the maintenance of the mitochondrial compartment. This is Enoyl-[acyl-carrier-protein] reductase, mitochondrial (etr1) from Schizosaccharomyces pombe (strain 972 / ATCC 24843) (Fission yeast).